The following is a 623-amino-acid chain: Membrane protein insertase YidC (623 aa).

A helical transmembrane segment spans residues 8–28; it reads LILATGLSFLVIMVWFFLFPP. A disordered region spans residues 33–64; the sequence is TEGEPTVATQQTAVAPSATPDAPTTAVPPDAD. The segment covering 44–62 has biased composition (low complexity); it reads TAVAPSATPDAPTTAVPPD. 4 helical membrane passes run 379–399, 449–469, 507–527, and 543–563; these read MGLA…PLAY, LPIL…FVTI, TTMA…SMWL, and IFAW…SGLV. A compositionally biased stretch (low complexity) spans 601–617; sequence KPAAQPAGKAANDGAAP. Residues 601 to 623 are disordered; sequence KPAAQPAGKAANDGAAPAKKRKP.

It belongs to the OXA1/ALB3/YidC family. Type 1 subfamily. As to quaternary structure, interacts with the Sec translocase complex via SecD. Specifically interacts with transmembrane segments of nascent integral membrane proteins during membrane integration.

The protein localises to the cell inner membrane. Its function is as follows. Required for the insertion and/or proper folding and/or complex formation of integral membrane proteins into the membrane. Involved in integration of membrane proteins that insert both dependently and independently of the Sec translocase complex, as well as at least some lipoproteins. Aids folding of multispanning membrane proteins. The protein is Membrane protein insertase YidC of Cereibacter sphaeroides (strain KD131 / KCTC 12085) (Rhodobacter sphaeroides).